The following is a 555-amino-acid chain: CTP synthase (555 aa).

An amidoligase domain region spans residues 1–267 (MAKFVFVTGG…CKEVLDCLDL (267 aa)). A CTP-binding site is contributed by Ser-13. Ser-13 lines the UTP pocket. Residues 14–19 (SIGKGI) and Asp-71 each bind ATP. Residues Asp-71 and Glu-141 each contribute to the Mg(2+) site. Residues 148–150 (DIE), 188–193 (KTKPTQ), and Lys-224 each bind CTP. UTP is bound by residues 188–193 (KTKPTQ) and Lys-224. Positions 292–534 (KVALVGKYVQ…IQAAQIRVPS (243 aa)) constitute a Glutamine amidotransferase type-1 domain. Gly-354 serves as a coordination point for L-glutamine. Catalysis depends on Cys-381, which acts as the Nucleophile; for glutamine hydrolysis. Residues 382–385 (LGMQ), Glu-405, and Arg-462 each bind L-glutamine. Active-site residues include His-507 and Glu-509. Positions 536-555 (PSEAFNPQSKIIEKKSLEQQ) are disordered. A compositionally biased stretch (basic and acidic residues) spans 546–555 (IIEKKSLEQQ).

It belongs to the CTP synthase family. Homotetramer.

It catalyses the reaction UTP + L-glutamine + ATP + H2O = CTP + L-glutamate + ADP + phosphate + 2 H(+). It carries out the reaction L-glutamine + H2O = L-glutamate + NH4(+). The enzyme catalyses UTP + NH4(+) + ATP = CTP + ADP + phosphate + 2 H(+). It participates in pyrimidine metabolism; CTP biosynthesis via de novo pathway; CTP from UDP: step 2/2. With respect to regulation, allosterically activated by GTP, when glutamine is the substrate; GTP has no effect on the reaction when ammonia is the substrate. The allosteric effector GTP functions by stabilizing the protein conformation that binds the tetrahedral intermediate(s) formed during glutamine hydrolysis. Inhibited by the product CTP, via allosteric rather than competitive inhibition. Catalyzes the ATP-dependent amination of UTP to CTP with either L-glutamine or ammonia as the source of nitrogen. Regulates intracellular CTP levels through interactions with the four ribonucleotide triphosphates. The polypeptide is CTP synthase (Prochlorococcus marinus (strain NATL1A)).